Reading from the N-terminus, the 55-residue chain is ATP synthase protein 8 (55 aa).

Residues 4–24 (LNPNPWFTILIFTWAVFLTIL) form a helical membrane-spanning segment.

This sequence belongs to the ATPase protein 8 family. As to quaternary structure, F-type ATPases have 2 components, CF(1) - the catalytic core - and CF(0) - the membrane proton channel.

The protein resides in the mitochondrion membrane. Mitochondrial membrane ATP synthase (F(1)F(0) ATP synthase or Complex V) produces ATP from ADP in the presence of a proton gradient across the membrane which is generated by electron transport complexes of the respiratory chain. F-type ATPases consist of two structural domains, F(1) - containing the extramembraneous catalytic core and F(0) - containing the membrane proton channel, linked together by a central stalk and a peripheral stalk. During catalysis, ATP synthesis in the catalytic domain of F(1) is coupled via a rotary mechanism of the central stalk subunits to proton translocation. Part of the complex F(0) domain. Minor subunit located with subunit a in the membrane. This Polypterus ornatipinnis (Ornate bichir) protein is ATP synthase protein 8 (mt-atp8).